A 386-amino-acid polypeptide reads, in one-letter code: uncharacterized protein (386 aa).

Belongs to the mimivirus L17x/L18x family.

This is an uncharacterized protein from Acanthamoeba polyphaga mimivirus (APMV).